We begin with the raw amino-acid sequence, 892 residues long: Translation initiation factor IF-2 (892 aa).

Composition is skewed to basic and acidic residues over residues 93–159 (VKRD…KDKV) and 166–216 (DMTK…EENK). The interval 93–304 (VKRDPQEAER…SSLQQGFQKP (212 aa)) is disordered. A compositionally biased stretch (basic residues) spans 254–269 (GRGRNAKAARPAKKGK). Residues 270-282 (HAESKADREEARA) are compositionally biased toward basic and acidic residues. The tr-type G domain occupies 391–560 (PRAPVVTIMG…LLQAEVLELK (170 aa)). The G1 stretch occupies residues 400–407 (GHVDHGKT). GTP is bound at residue 400-407 (GHVDHGKT). Positions 425 to 429 (GITQH) are G2. The G3 stretch occupies residues 446 to 449 (DTPG). GTP is bound by residues 446 to 450 (DTPGH) and 500 to 503 (NKID). The tract at residues 500–503 (NKID) is G4. The tract at residues 536–538 (SAK) is G5.

This sequence belongs to the TRAFAC class translation factor GTPase superfamily. Classic translation factor GTPase family. IF-2 subfamily.

Its subcellular location is the cytoplasm. Functionally, one of the essential components for the initiation of protein synthesis. Protects formylmethionyl-tRNA from spontaneous hydrolysis and promotes its binding to the 30S ribosomal subunits. Also involved in the hydrolysis of GTP during the formation of the 70S ribosomal complex. This is Translation initiation factor IF-2 from Salmonella gallinarum (strain 287/91 / NCTC 13346).